The chain runs to 453 residues: MIKYFGTDGIRGVVGKTPITADFFFKLGAVIGKILYFYDVKKIIIGRDTRLSSYMLEEALQFGLSLVGVSVISVGVLPTPAISYFTKLFNLEVGVVISASHNQFRDNGIKFFVKNGVKLSAKFERRIEKQLNKTIILKQFVDLGHISYKRALQQKYINFCISTLPNNFRLNNFKIVLDCANGSTYELAPIIFRELGANVVLMSAAPNGLNINDKCGTTDLQEIQRLVLSEKADLGISFDGDGDRVIMIDHFGNSVNGDQILYILAKNYKKNKKLRGGVVGTKMSNGGLSLALSKIGIPFITVNIGDRYIFKKLKEKQWRLGAESSGHVILLDYAPVGDGIITSLQILKIIFDENSTLKSLCSDIHMLPQIIINIKNNIDISFLKNFKIQSVLSKYKDFLGKYSRIMLRLSGTEKCIRIMIEGCCSKKINIFSKMLINVINSVKKSRFSIITMF.

Serine 100 acts as the Phosphoserine intermediate in catalysis. Residues serine 100, aspartate 239, aspartate 241, and aspartate 243 each coordinate Mg(2+). Phosphoserine is present on serine 100.

Belongs to the phosphohexose mutase family. The cofactor is Mg(2+). In terms of processing, activated by phosphorylation.

The catalysed reaction is alpha-D-glucosamine 1-phosphate = D-glucosamine 6-phosphate. Its function is as follows. Catalyzes the conversion of glucosamine-6-phosphate to glucosamine-1-phosphate. The polypeptide is Phosphoglucosamine mutase (Buchnera aphidicola subsp. Baizongia pistaciae (strain Bp)).